The chain runs to 631 residues: Pescadillo homolog (631 aa).

Positions 321 to 414 (RLRNLFKGLK…QLLPTNKYFL (94 aa)) constitute a BRCT domain. Disordered regions lie at residues 450-469 (HAQS…EDDT) and 489-569 (EYKK…MVKP). Residues S453 and S457 each carry the phosphoserine modification. Composition is skewed to acidic residues over residues 454–469 (DDES…EDDT) and 499–524 (VNED…EELD). Residues 510-541 (FDGEQESDEEEEELDEKTKRLQEEKKKMSVQS) are a coiled coil. Residues 525–536 (EKTKRLQEEKKK) show a composition bias toward basic and acidic residues. Residues 543–552 (KVHKVNKRQL) are compositionally biased toward basic residues. The segment covering 553–562 (HKAEVDEHRL) has biased composition (basic and acidic residues).

It belongs to the pescadillo family.

The protein localises to the nucleus. The protein resides in the nucleolus. Its subcellular location is the nucleoplasm. Its function is as follows. Required for maturation of ribosomal RNAs and formation of the large ribosomal subunit. In Drosophila mojavensis (Fruit fly), this protein is Pescadillo homolog.